The chain runs to 534 residues: Serine protease vicPa (534 aa).

An N-terminal signal peptide occupies residues 1–17 (MLCYLLIHILCLQAVLG). Asn-65 and Asn-126 each carry an N-linked (GlcNAc...) asparagine glycan. The active-site Charge relay system is the Ser-174. 3 N-linked (GlcNAc...) asparagine glycosylation sites follow: Asn-297, Asn-416, and Asn-436. Asp-450 functions as the Charge relay system in the catalytic mechanism.

It belongs to the peptidase S28 family.

It participates in mycotoxin biosynthesis. In terms of biological role, serine protease, part of the gene cluster that mediates the biosynthesis of the secondary metabolite victorin, the molecular basis for Victoria blight of oats. Within the pathway, vicPa and vicPb are probably involved in the processing of the vicA1 and vicA2 precursors. The pathway starts with the processing of the precursor vicA1 by several endopeptidases including kexin proteases as well as the cluster-specific S28 family peptidases vicPa and vicPb to produce 7 identical copies of the hexapeptide Gly-Leu-Lys-Leu-Ala-Phe. After being excised from the precursor peptide, the core peptides are cyclized and modified post-translationally by enzymes encoded within the gene cluster. The ustYa family oxidase vicYb is required for the formation of the macrocycle in victorin and the copper amine oxidases (CAOs) vicK1 and vicK2 are responsible for converting victorin to the active form by oxidizing the N-terminal glycyl residue in the peptides to glyoxylate. Relaxed substrate specificity of enzymes in the victorin biosynthetic pathway results in a metabolic grid that produces a set of analogs including victorinines B, C, E or HV-toxin M. The sequence is that of Serine protease vicPa from Bipolaris victoriae (strain FI3) (Victoria blight of oats agent).